The primary structure comprises 589 residues: Protein POF1B (589 aa).

Positions 334 to 443 (TFSNIREELG…QNLRMQVSET (110 aa)) form a coiled coil.

Interacts with nonmuscle actin.

The protein localises to the cell junction. Its subcellular location is the tight junction. Plays a key role in the organization of epithelial monolayers by regulating the actin cytoskeleton. May be involved in ovary development. The chain is Protein POF1B (POF1B) from Homo sapiens (Human).